We begin with the raw amino-acid sequence, 148 residues long: Putative nickel-responsive regulator (148 aa).

Positions 88, 99, 101, and 107 each coordinate Ni(2+).

Belongs to the transcriptional regulatory CopG/NikR family. Homotetramer. It depends on Ni(2+) as a cofactor.

In terms of biological role, transcriptional regulator. The protein is Putative nickel-responsive regulator of Helicobacter pylori (strain J99 / ATCC 700824) (Campylobacter pylori J99).